The chain runs to 309 residues: Sulfur oxygenase/reductase (309 aa).

C31 carries the post-translational modification Cysteine persulfide. Fe cation contacts are provided by H86, H90, and E114.

Homoicosatetramer. The resulting structure is a hollow sphere where catalysis takes place in the inside cavity. Requires Fe cation as cofactor.

It is found in the cytoplasm. It carries out the reaction 4 sulfur + O2 + 4 H2O = 2 hydrogen sulfide + 2 sulfite + 6 H(+). Inhibited by zinc. Functionally, catalyzes the simultaneous oxidation and reduction of elemental sulfur in the presence of oxygen, with sulfite and hydrogen sulfide as products. The protein is Sulfur oxygenase/reductase (sor) of Acidianus ambivalens (Desulfurolobus ambivalens).